The following is a 269-amino-acid chain: Glutamate racemase (269 aa).

Residues 11 to 12 (DS) and 43 to 44 (YG) contribute to the substrate site. The active-site Proton donor/acceptor is the Cys-74. 75-76 (NT) lines the substrate pocket. The active-site Proton donor/acceptor is Cys-185. 186–187 (TH) serves as a coordination point for substrate.

This sequence belongs to the aspartate/glutamate racemases family.

The catalysed reaction is L-glutamate = D-glutamate. Its pathway is cell wall biogenesis; peptidoglycan biosynthesis. Its function is as follows. Provides the (R)-glutamate required for cell wall biosynthesis. The polypeptide is Glutamate racemase (Bacillus cereus (strain ATCC 10987 / NRS 248)).